The primary structure comprises 191 residues: Imidazoleglycerol-phosphate dehydratase (191 aa).

The protein belongs to the imidazoleglycerol-phosphate dehydratase family.

It localises to the cytoplasm. It catalyses the reaction D-erythro-1-(imidazol-4-yl)glycerol 3-phosphate = 3-(imidazol-4-yl)-2-oxopropyl phosphate + H2O. Its pathway is amino-acid biosynthesis; L-histidine biosynthesis; L-histidine from 5-phospho-alpha-D-ribose 1-diphosphate: step 6/9. The sequence is that of Imidazoleglycerol-phosphate dehydratase from Methanosarcina barkeri (strain Fusaro / DSM 804).